We begin with the raw amino-acid sequence, 395 residues long: MAEEPTYTAEQVNDVVHAGLGTVDFFLSRPVDGQSSLGKGSVPPGITAVLTNAAELKAKTAAAAPVKPKRKKIQHMTPAYTIADNGDPNRLPANTPIANPLIPIERPPGRMTDLDLATGTVTQGTYKGVELAKAGKNALLTRFSSGPSLTDQASSKDPNFKRGGEKLTDATKADIGGSGASPGSETKLRFMSGAIQHVPQLLPLTASSPVLVEPAPIGAENVKEIIEILRGLDLRMQSLEGKVDKILATSATITALKNEVTSLKANVATVEGMMTTMKIMDPSTPTNVPVEKIRKNLKDTPVIISGPLSESHITEGSDMIVLDELARPSLSSTKKIVRRPEPKKDLTGMKLMLIQLANDCMGKPDQKAEIVAKIHAATREAQLLDIKRSIIKSAI.

Polar residues predominate over residues 143 to 157; the sequence is FSSGPSLTDQASSKD. The segment at 143–183 is disordered; it reads FSSGPSLTDQASSKDPNFKRGGEKLTDATKADIGGSGASPG. Over residues 158-172 the composition is skewed to basic and acidic residues; sequence PNFKRGGEKLTDATK. The interval 220-283 is multimerization; that stretch reads ENVKEIIEIL…MTTMKIMDPS (64 aa).

It belongs to the rubulavirus/avulavirus P protein family. Homotetramer. Interacts (via multimerization domain) with polymerase L; this interaction forms the polymerase L-P complex. Interacts (via N-terminus) with N0 (via Ncore); this interaction allows P to chaperon N0 to avoid N polymerization before encapsidation. Interacts (via C-terminus) with N-RNA template; this interaction positions the polymerase on the template for both transcription and replication.

Essential cofactor of the RNA polymerase L that plays a central role in the transcription and replication by forming the polymerase complex with RNA polymerase L and recruiting L to the genomic N-RNA template for RNA synthesis. Also plays a central role in the encapsidation of nascent RNA chains by forming the encapsidation complex with the nucleocapsid protein N (N-P complex). Acts as a chaperone for newly synthesized free N protein, so-called N0, allowing encapsidation of nascent RNA chains during replication. The nucleoprotein protein N prevents excessive phosphorylation of P, which leads to down-regulation of viral transcription/ replication. Participates, together with N, in the formation of viral factories (viroplasms), which are large inclusions in the host cytoplasm where replication takes place. This Simian virus 41 (SV41) protein is Phosphoprotein (P/V).